The primary structure comprises 159 residues: Cyclic pyranopterin monophosphate synthase (159 aa).

Substrate contacts are provided by residues L75–H77 and M113–E114. The active site involves D128.

This sequence belongs to the MoaC family. In terms of assembly, homohexamer; trimer of dimers.

It carries out the reaction (8S)-3',8-cyclo-7,8-dihydroguanosine 5'-triphosphate = cyclic pyranopterin phosphate + diphosphate. Its pathway is cofactor biosynthesis; molybdopterin biosynthesis. Catalyzes the conversion of (8S)-3',8-cyclo-7,8-dihydroguanosine 5'-triphosphate to cyclic pyranopterin monophosphate (cPMP). This is Cyclic pyranopterin monophosphate synthase from Vibrio vulnificus (strain YJ016).